Consider the following 152-residue polypeptide: Leptin (152 aa).

The N-terminal stretch at 1 to 26 (MDHILALVLALLPLSLCVALPGALDA) is a signal peptide. C109 and C152 form a disulfide bridge.

This sequence belongs to the leptin family. In terms of tissue distribution, expressed mostly in the liver.

It is found in the secreted. May function as part of a signaling pathway that acts to regulate the size of the body fat depot. The protein is Leptin (lep) of Takifugu rubripes (Japanese pufferfish).